Consider the following 863-residue polypeptide: Leucine--tRNA ligase (863 aa).

The short motif at 40-51 (PYPSGAGLHVGH) is the 'HIGH' region element. Residues 635 to 639 (KMSKS) carry the 'KMSKS' region motif. Lysine 638 contributes to the ATP binding site.

Belongs to the class-I aminoacyl-tRNA synthetase family.

The protein localises to the cytoplasm. The catalysed reaction is tRNA(Leu) + L-leucine + ATP = L-leucyl-tRNA(Leu) + AMP + diphosphate. This chain is Leucine--tRNA ligase, found in Leptospira interrogans serogroup Icterohaemorrhagiae serovar Lai (strain 56601).